The following is a 177-amino-acid chain: Ribosome maturation factor RimP (177 aa).

This sequence belongs to the RimP family.

The protein localises to the cytoplasm. Required for maturation of 30S ribosomal subunits. The chain is Ribosome maturation factor RimP from Streptococcus sanguinis (strain SK36).